Here is a 443-residue protein sequence, read N- to C-terminus: Proline--tRNA ligase (443 aa).

The protein belongs to the class-II aminoacyl-tRNA synthetase family. ProS type 2 subfamily. Homodimer.

The protein resides in the cytoplasm. It catalyses the reaction tRNA(Pro) + L-proline + ATP = L-prolyl-tRNA(Pro) + AMP + diphosphate. Catalyzes the attachment of proline to tRNA(Pro) in a two-step reaction: proline is first activated by ATP to form Pro-AMP and then transferred to the acceptor end of tRNA(Pro). In Methylobacterium nodulans (strain LMG 21967 / CNCM I-2342 / ORS 2060), this protein is Proline--tRNA ligase.